The primary structure comprises 211 residues: Protein YCF54, chloroplastic (211 aa).

The N-terminal 80 residues, 1-80 (MWSVTGALTV…GESTKYHFLV (80 aa)), are a transit peptide targeting the chloroplast.

The protein belongs to the ycf54 family. As to quaternary structure, interacts with LFNR1 and CRD1/CHL27 in chloroplasts.

The protein localises to the plastid. The protein resides in the chloroplast. Functionally, involved in the biosynthesis of chlorophyll; acts probably as a scaffolding factor in the MgProto monomethylester (MgProtoME) cyclase complex to stabilize CRD1/CHL27, the catalytic subunit which catalyzes the formation of a fifth isocyclic ring to tetrapyrroles to form protochlorophyllide. The protein is Protein YCF54, chloroplastic of Arabidopsis thaliana (Mouse-ear cress).